The following is a 137-amino-acid chain: Large ribosomal subunit protein uL16 (137 aa).

The protein belongs to the universal ribosomal protein uL16 family. As to quaternary structure, part of the 50S ribosomal subunit.

Functionally, binds 23S rRNA and is also seen to make contacts with the A and possibly P site tRNAs. This chain is Large ribosomal subunit protein uL16, found in Streptococcus mutans serotype c (strain ATCC 700610 / UA159).